Here is a 318-residue protein sequence, read N- to C-terminus: N-acyl-aromatic-L-amino acid amidohydrolase (carboxylate-forming) (318 aa).

Positions 1–210 (MSSLPGSREP…ILDFIELFNQ (210 aa)) are hydrolytic domain. Zn(2+) is bound by residues His-21 and Glu-24. Substrate-binding positions include Arg-63 and 70–71 (NR). Residue His-116 participates in Zn(2+) binding. Positions 177 and 287 each coordinate substrate. The shielding domain stretch occupies residues 211–318 (GMDLPAFEMD…RLTPRSTQTP (108 aa)). Phosphothreonine is present on Thr-317.

The protein belongs to the AspA/AstE family. Aspartoacylase subfamily. Exists as a mixture of homodimers and homotetramer, both catalytically active. Zn(2+) is required as a cofactor. Expressed predominantly in kidney and to a lesser extent in liver. Weakly expressed in heart, small intestine, brain, lung, testis, and stomach.

The protein resides in the apical cell membrane. It is found in the cytoplasm. The enzyme catalyses an N-acyl-aromatic L-alpha-amino acid + H2O = an aromatic L-alpha-amino acid + a carboxylate. It catalyses the reaction an N-acetyl-L-cysteine-S-conjugate + H2O = an S-substituted L-cysteine + acetate. In terms of biological role, plays an important role in deacetylating mercapturic acids in kidney proximal tubules. Also acts on N-acetyl-aromatic amino acids. The polypeptide is N-acyl-aromatic-L-amino acid amidohydrolase (carboxylate-forming) (Acy3) (Mus musculus (Mouse)).